A 239-amino-acid polypeptide reads, in one-letter code: Type II restriction enzyme Eco47II (239 aa).

It carries out the reaction Endonucleolytic cleavage of DNA to give specific double-stranded fragments with terminal 5'-phosphates.. Its function is as follows. A P subtype restriction enzyme that recognizes the double-stranded sequence 5'-GGNCC-3'; the cleavage site is unknown. The polypeptide is Type II restriction enzyme Eco47II (Escherichia coli).